The following is a 368-amino-acid chain: Ribosomal RNA large subunit methyltransferase M (368 aa).

S-adenosyl-L-methionine contacts are provided by residues serine 199, 232-235 (APGG), aspartate 251, aspartate 271, and aspartate 287. Lysine 316 (proton acceptor) is an active-site residue.

It belongs to the class I-like SAM-binding methyltransferase superfamily. RNA methyltransferase RlmE family. RlmM subfamily. As to quaternary structure, monomer.

The protein resides in the cytoplasm. It carries out the reaction cytidine(2498) in 23S rRNA + S-adenosyl-L-methionine = 2'-O-methylcytidine(2498) in 23S rRNA + S-adenosyl-L-homocysteine + H(+). In terms of biological role, catalyzes the 2'-O-methylation at nucleotide C2498 in 23S rRNA. This Aromatoleum aromaticum (strain DSM 19018 / LMG 30748 / EbN1) (Azoarcus sp. (strain EbN1)) protein is Ribosomal RNA large subunit methyltransferase M.